The following is a 413-amino-acid chain: Aspartate kinase (413 aa).

ACT domains are found at residues 267–341 (LTIR…GDTK) and 347–413 (IVGV…RQGE).

The protein belongs to the aspartokinase family. In terms of assembly, homotrimer. In the presence of inhibitory amino acids the Stokes radius of the protein increases, suggesting its oligomeric state may change.

The protein resides in the cytoplasm. The catalysed reaction is L-aspartate + ATP = 4-phospho-L-aspartate + ADP. It functions in the pathway amino-acid biosynthesis; L-lysine biosynthesis via DAP pathway; (S)-tetrahydrodipicolinate from L-aspartate: step 1/4. The protein operates within amino-acid biosynthesis; L-methionine biosynthesis via de novo pathway; L-homoserine from L-aspartate: step 1/3. Its pathway is amino-acid biosynthesis; L-threonine biosynthesis; L-threonine from L-aspartate: step 1/5. Its activity is regulated as follows. Activated by L-lysine, L-methionine, and L-isoleucine. L-threonine, at low concentrations, is a mild activator and has a weak inhibitory effect only at concentrations over 10 mM. Strongly feedback inhibited by the concerted combination of L-lysine and L-threonine and slightly feedback inhibited by the concerted combination of L-threonine and L-methionine. Activated by the combination of L-methionine and L-lysine, L-methionine and L-isoleucine and L-lysine and L-isoleucine. Its function is as follows. Involved in the biosynthesis of L-aspartate-beta-semialdehyde which is a central intermediate in the biosynthesis of different amino acids (L-lysine, L-methionine, L-threonine). Catalyzes the phosphorylation of the beta-carboxyl group of L-aspartate to yield 4-phospho-L-aspartate. This chain is Aspartate kinase, found in Pseudomonas fluorescens (strain SBW25).